A 160-amino-acid chain; its full sequence is Sec-independent protein translocase protein TatB (160 aa).

Residues 1 to 21 form a helical membrane-spanning segment; it reads MIDLGVSKIALIGAVALIVIG. Disordered regions lie at residues 70 to 100 and 133 to 160; these read ARDV…STAT and RSGV…SSSF. Positions 89-100 are enriched in polar residues; the sequence is SDATGSDASTAT.

It belongs to the TatB family. As to quaternary structure, the Tat system comprises two distinct complexes: a TatABC complex, containing multiple copies of TatA, TatB and TatC subunits, and a separate TatA complex, containing only TatA subunits. Substrates initially bind to the TatABC complex, which probably triggers association of the separate TatA complex to form the active translocon.

Its subcellular location is the cell inner membrane. Part of the twin-arginine translocation (Tat) system that transports large folded proteins containing a characteristic twin-arginine motif in their signal peptide across membranes. Together with TatC, TatB is part of a receptor directly interacting with Tat signal peptides. TatB may form an oligomeric binding site that transiently accommodates folded Tat precursor proteins before their translocation. This Polaromonas sp. (strain JS666 / ATCC BAA-500) protein is Sec-independent protein translocase protein TatB.